The chain runs to 647 residues: Transcriptional repressor XBP1 (647 aa).

Composition is skewed to polar residues over residues 138-148 and 156-170; these read SNKTPVSASPT and STAS…LTKN. 2 disordered regions span residues 138 to 170 and 264 to 295; these read SNKT…LTKN and LLSS…STSS. Low complexity predominate over residues 264–282; that stretch reads LLSSSTSSPPKRRTSTGST. Residues 282–395 enclose the HTH APSES-type domain; that stretch reads TFLDANASSS…PDFPKDCESW (114 aa). Residues 318–339 constitute a DNA-binding region (H-T-H motif); that stretch reads CQSYKDFLINELGPDQIDLPNL. A compositionally biased stretch (low complexity) spans 425–434; it reads TNFTSTAVAR. Disordered stretches follow at residues 425–455, 485–508, and 612–647; these read TNFT…HSKA, KKNS…GPRD, and QNQR…NSKQ. Residues 435–445 are compositionally biased toward basic residues; sequence PRQKPRPRPRQ. Residues 493–502 are compositionally biased toward low complexity; the sequence is SSTYTSQTSS.

Its subcellular location is the nucleus. Functionally, transcriptional repressor which binds to the consensus sequence 5'-GCCTCGA[G/A]G[C/A]-3'. Represses CLN1 transcription. This Saccharomyces cerevisiae (strain ATCC 204508 / S288c) (Baker's yeast) protein is Transcriptional repressor XBP1 (XBP1).